The primary structure comprises 610 residues: DNA mismatch repair protein MutL (610 aa).

Belongs to the DNA mismatch repair MutL/HexB family.

Functionally, this protein is involved in the repair of mismatches in DNA. It is required for dam-dependent methyl-directed DNA mismatch repair. May act as a 'molecular matchmaker', a protein that promotes the formation of a stable complex between two or more DNA-binding proteins in an ATP-dependent manner without itself being part of a final effector complex. The polypeptide is DNA mismatch repair protein MutL (Rickettsia rickettsii (strain Iowa)).